Reading from the N-terminus, the 196-residue chain is Imidazoleglycerol-phosphate dehydratase (196 aa).

It belongs to the imidazoleglycerol-phosphate dehydratase family.

Its subcellular location is the cytoplasm. The catalysed reaction is D-erythro-1-(imidazol-4-yl)glycerol 3-phosphate = 3-(imidazol-4-yl)-2-oxopropyl phosphate + H2O. It participates in amino-acid biosynthesis; L-histidine biosynthesis; L-histidine from 5-phospho-alpha-D-ribose 1-diphosphate: step 6/9. The protein is Imidazoleglycerol-phosphate dehydratase of Moorella thermoacetica (strain ATCC 39073 / JCM 9320).